The sequence spans 349 residues: tRNA pseudouridine synthase D (349 aa).

Residue Phe27 coordinates substrate. Asp80 functions as the Nucleophile in the catalytic mechanism. Residue Asn129 coordinates substrate. The TRUD domain occupies 155 to 303 (GVPNYFGAQR…VEAARRAMLL (149 aa)). Phe329 lines the substrate pocket.

It belongs to the pseudouridine synthase TruD family.

The catalysed reaction is uridine(13) in tRNA = pseudouridine(13) in tRNA. Functionally, responsible for synthesis of pseudouridine from uracil-13 in transfer RNAs. The sequence is that of tRNA pseudouridine synthase D from Escherichia coli (strain SE11).